Here is a 214-residue protein sequence, read N- to C-terminus: UPF0725 protein At1g19565 (214 aa).

The interval 56–92 is disordered; the sequence is EEEYEPSLPSSESPTDSCHADHESPDSPKYQQPAPGE.

Belongs to the UPF0725 (EMB2204) family.

The sequence is that of UPF0725 protein At1g19565 from Arabidopsis thaliana (Mouse-ear cress).